Consider the following 1094-residue polypeptide: RecBCD enzyme subunit RecB (1094 aa).

Residues 1–326 (MDRFELLGPL…YTLGVNWRSD (326 aa)) form the UvrD-like helicase ATP-binding domain. The DNA-binding and helicase activity, interacts with RecC stretch occupies residues 1-713 (MDRFELLGPL…LLRGRRPGQS (713 aa)). An ATP-binding site is contributed by 21–28 (ASAGTGKT). The 257-residue stretch at 357–613 (AGHRLASAPR…QIMTVFVAKG (257 aa)) folds into the UvrD-like helicase C-terminal domain. The tract at residues 775 to 1094 (TWRRTSYSDL…DLLDRGRLQS (320 aa)) is nuclease activity, interacts with RecD and RecA. 3 residues coordinate Mg(2+): histidine 838, aspartate 975, and aspartate 989. The active-site For nuclease activity is the aspartate 989.

Belongs to the helicase family. UvrD subfamily. As to quaternary structure, heterotrimer of RecB, RecC and RecD. All subunits contribute to DNA-binding. Interacts with RecA. Mg(2+) is required as a cofactor.

It carries out the reaction Exonucleolytic cleavage (in the presence of ATP) in either 5'- to 3'- or 3'- to 5'-direction to yield 5'-phosphooligonucleotides.. The catalysed reaction is Couples ATP hydrolysis with the unwinding of duplex DNA by translocating in the 3'-5' direction.. The enzyme catalyses ATP + H2O = ADP + phosphate + H(+). In terms of biological role, a helicase/nuclease that prepares dsDNA breaks (DSB) for recombinational DNA repair. Binds to DSBs and unwinds DNA via a highly rapid and processive ATP-dependent bidirectional helicase activity. In the holoenzyme this subunit contributes ATPase, 3'-5' helicase, exonuclease activity and loads RecA onto ssDNA. Unlike the case in E.coli, suppresses RecA-dependent homologous recombination, is instead required for single-strand annealing pathway repair of DSB. The sequence is that of RecBCD enzyme subunit RecB from Mycobacterium tuberculosis (strain CDC 1551 / Oshkosh).